Reading from the N-terminus, the 383-residue chain is Deoxyuridylate hydroxymethyltransferase (383 aa).

The active site involves C162.

It belongs to the thymidylate synthase family. Homodimer.

It catalyses the reaction dUMP + (6R)-5,10-methylene-5,6,7,8-tetrahydrofolate + H2O = 5-hydroxymethyl-dUMP + (6S)-5,6,7,8-tetrahydrofolate. In terms of biological role, catalyzes formation of 5-hydroxymethyldeoxyuridylate (5HMdUMP) as a step in the pathway that replaces dTMP by thymidine hypermodifications in the viral genome. As a final result of the pathway of hypermodification, hydroxymethyluracil substitutes for a subset of thymidines in the viral DNA. These modifications probably prevent degradation of viral DNA by the host restriction-modification antiviral defense system. This Bacillus subtilis (Bacteriophage SP01) protein is Deoxyuridylate hydroxymethyltransferase.